Here is a 651-residue protein sequence, read N- to C-terminus: Probable potassium transport system protein Kup (651 aa).

Helical transmembrane passes span 30–50, 71–91, 124–144, 158–178, 190–210, 233–253, 268–288, 310–330, 358–378, 387–407, 413–433, and 437–457; these read LALA…LYSL, IISM…VIFV, LLLG…TPAI, PDAE…LFIV, FGPV…PWII, AMAF…EALY, WFGL…AMIL, LVTI…SGAF, IYIP…ILIF, AYGL…LVLA, WPMW…LSIF, and LLKI…VVII.

It belongs to the HAK/KUP transporter (TC 2.A.72) family.

Its subcellular location is the cell membrane. The catalysed reaction is K(+)(in) + H(+)(in) = K(+)(out) + H(+)(out). Transport of potassium into the cell. Likely operates as a K(+):H(+) symporter. The sequence is that of Probable potassium transport system protein Kup from Cutibacterium acnes (strain DSM 16379 / KPA171202) (Propionibacterium acnes).